Consider the following 518-residue polypeptide: Protein nucleotidyltransferase YdiU (518 aa).

8 residues coordinate ATP: glycine 109, glycine 111, arginine 112, lysine 131, aspartate 143, glycine 144, arginine 194, and arginine 201. Catalysis depends on aspartate 270, which acts as the Proton acceptor. Positions 271 and 280 each coordinate Mg(2+). An ATP-binding site is contributed by aspartate 280.

It belongs to the SELO family. The cofactor is Mg(2+). Requires Mn(2+) as cofactor.

It catalyses the reaction L-seryl-[protein] + ATP = 3-O-(5'-adenylyl)-L-seryl-[protein] + diphosphate. The catalysed reaction is L-threonyl-[protein] + ATP = 3-O-(5'-adenylyl)-L-threonyl-[protein] + diphosphate. The enzyme catalyses L-tyrosyl-[protein] + ATP = O-(5'-adenylyl)-L-tyrosyl-[protein] + diphosphate. It carries out the reaction L-histidyl-[protein] + UTP = N(tele)-(5'-uridylyl)-L-histidyl-[protein] + diphosphate. It catalyses the reaction L-seryl-[protein] + UTP = O-(5'-uridylyl)-L-seryl-[protein] + diphosphate. The catalysed reaction is L-tyrosyl-[protein] + UTP = O-(5'-uridylyl)-L-tyrosyl-[protein] + diphosphate. Nucleotidyltransferase involved in the post-translational modification of proteins. It can catalyze the addition of adenosine monophosphate (AMP) or uridine monophosphate (UMP) to a protein, resulting in modifications known as AMPylation and UMPylation. The polypeptide is Protein nucleotidyltransferase YdiU (Paraburkholderia xenovorans (strain LB400)).